A 513-amino-acid polypeptide reads, in one-letter code: Cytochrome P450 71D445 (513 aa).

The helical; Signal-anchor for type II membrane protein transmembrane segment at 12-28 (SEWAITSTITLLFLILL) threads the bilayer. Cys450 contributes to the heme binding site.

This sequence belongs to the cytochrome P450 family. Heme serves as cofactor. In terms of tissue distribution, expressed in mature seeds.

It localises to the membrane. The catalysed reaction is (-)-casbene + reduced [NADPH--hemoprotein reductase] + O2 = 8-hydroxycasbene + oxidized [NADPH--hemoprotein reductase] + H2O + H(+). It carries out the reaction 4-hydroxycasbene + reduced [NADPH--hemoprotein reductase] + O2 = 4,8-dihydroxycasbene + oxidized [NADPH--hemoprotein reductase] + H2O + H(+). The enzyme catalyses 4,8-dihydroxycasbene + reduced [NADPH--hemoprotein reductase] + O2 = 4,5,8-trihydroxycasbene + oxidized [NADPH--hemoprotein reductase] + H2O + H(+). Its pathway is secondary metabolite biosynthesis; terpenoid biosynthesis. Involved in the biosynthesis of macrocyclic lathyrane type diterpenoids (also called Euphorbia factors) natural products, including the cyclization route from casbene to jolkinol C, a precursor for ingenol mebutate that is used to treat actinic keratosis, a precancerous skin condition. Catalyzes the hydroxylation of (-)-casbene and 4-hydroxycasbene to produce 8-hydroxycasbene and 4,8-dihydroxycasbene, respectively. Also mediates the formation of 4-hydroxy-8-ketocasbene from 4,8-dihydroxycasbene. Together with ADH1, triggers the biosynthesis of 8-ketocasbene from 8-hydroxycasbene. The sequence is that of Cytochrome P450 71D445 from Euphorbia lathyris (Caper spurge).